Consider the following 129-residue polypeptide: MVLNLIIPQEWNILPCATLQVELLRIIRAKKKSDLTSAGVVGYYNDVVAESMDFFDCLWFRKLEDTSKEPDFHRYSLMIVPMVPSSAADSDDSSSCSECDSDALLSDDGPCSTCDECHDSDRYELSSDC.

The segment covering 85–108 (SSAADSDDSSSCSECDSDALLSDD) has biased composition (low complexity). The segment at 85 to 110 (SSAADSDDSSSCSECDSDALLSDDGP) is disordered.

This is an uncharacterized protein from Microplitis demolitor (Parasitoid wasp).